The chain runs to 841 residues: DNA ligase (841 aa).

NAD(+)-binding positions include 54–58, 103–104, and Glu-143; these read DAEYD and SL. The active-site N6-AMP-lysine intermediate is the Lys-145. NAD(+) contacts are provided by Arg-166, Glu-203, Lys-321, and Lys-345. Cys-471, Cys-474, Cys-489, and Cys-495 together coordinate Zn(2+). The tract at residues 554 to 575 is disordered; that stretch reads KTVAESDQMPSEGSSVGASGKH. A compositionally biased stretch (polar residues) spans 561–570; sequence QMPSEGSSVG. Residues 764-841 form the BRCT domain; it reads GINKAVAGKT…SEAELLTLLG (78 aa).

The protein belongs to the NAD-dependent DNA ligase family. LigA subfamily. Mg(2+) serves as cofactor. Requires Mn(2+) as cofactor.

It carries out the reaction NAD(+) + (deoxyribonucleotide)n-3'-hydroxyl + 5'-phospho-(deoxyribonucleotide)m = (deoxyribonucleotide)n+m + AMP + beta-nicotinamide D-nucleotide.. DNA ligase that catalyzes the formation of phosphodiester linkages between 5'-phosphoryl and 3'-hydroxyl groups in double-stranded DNA using NAD as a coenzyme and as the energy source for the reaction. It is essential for DNA replication and repair of damaged DNA. The protein is DNA ligase of Neisseria meningitidis serogroup C (strain 053442).